The sequence spans 255 residues: 5-oxoprolinase subunit A 1 (255 aa).

This sequence belongs to the LamB/PxpA family. As to quaternary structure, forms a complex composed of PxpA, PxpB and PxpC.

The catalysed reaction is 5-oxo-L-proline + ATP + 2 H2O = L-glutamate + ADP + phosphate + H(+). In terms of biological role, catalyzes the cleavage of 5-oxoproline to form L-glutamate coupled to the hydrolysis of ATP to ADP and inorganic phosphate. This is 5-oxoprolinase subunit A 1 from Bradyrhizobium diazoefficiens (strain JCM 10833 / BCRC 13528 / IAM 13628 / NBRC 14792 / USDA 110).